Consider the following 369-residue polypeptide: 4-hydroxy-3-methylbut-2-en-1-yl diphosphate synthase (flavodoxin) (369 aa).

[4Fe-4S] cluster contacts are provided by Cys-270, Cys-273, Cys-305, and Glu-312.

This sequence belongs to the IspG family. It depends on [4Fe-4S] cluster as a cofactor.

It catalyses the reaction (2E)-4-hydroxy-3-methylbut-2-enyl diphosphate + oxidized [flavodoxin] + H2O + 2 H(+) = 2-C-methyl-D-erythritol 2,4-cyclic diphosphate + reduced [flavodoxin]. It participates in isoprenoid biosynthesis; isopentenyl diphosphate biosynthesis via DXP pathway; isopentenyl diphosphate from 1-deoxy-D-xylulose 5-phosphate: step 5/6. In terms of biological role, converts 2C-methyl-D-erythritol 2,4-cyclodiphosphate (ME-2,4cPP) into 1-hydroxy-2-methyl-2-(E)-butenyl 4-diphosphate. This is 4-hydroxy-3-methylbut-2-en-1-yl diphosphate synthase (flavodoxin) from Pseudomonas putida (strain ATCC 47054 / DSM 6125 / CFBP 8728 / NCIMB 11950 / KT2440).